Consider the following 353-residue polypeptide: Quinolinate synthase (353 aa).

The iminosuccinate site is built by His-47 and Ser-68. Cys-113 contacts [4Fe-4S] cluster. Residues Tyr-139–Asn-141 and Ser-156 contribute to the iminosuccinate site. Cys-200 serves as a coordination point for [4Fe-4S] cluster. Iminosuccinate-binding positions include His-226–Glu-228 and Thr-243. Cys-297 is a binding site for [4Fe-4S] cluster.

Belongs to the quinolinate synthase family. Type 1 subfamily. It depends on [4Fe-4S] cluster as a cofactor.

The protein resides in the cytoplasm. The enzyme catalyses iminosuccinate + dihydroxyacetone phosphate = quinolinate + phosphate + 2 H2O + H(+). It functions in the pathway cofactor biosynthesis; NAD(+) biosynthesis; quinolinate from iminoaspartate: step 1/1. In terms of biological role, catalyzes the condensation of iminoaspartate with dihydroxyacetone phosphate to form quinolinate. This is Quinolinate synthase from Yersinia pestis bv. Antiqua (strain Nepal516).